We begin with the raw amino-acid sequence, 397 residues long: Probable peptidoglycan glycosyltransferase FtsW (397 aa).

Topologically, residues methionine 1 to aspartate 18 are cytoplasmic. A helical membrane pass occupies residues leucine 19–alanine 39. The Periplasmic portion of the chain corresponds to serine 40–histidine 58. The helical transmembrane segment at leucine 59–tryptophan 79 threads the bilayer. At tryptophan 80 to glutamine 83 the chain is on the cytoplasmic side. The helical transmembrane segment at serine 84–glycine 104 threads the bilayer. Residues arginine 105–arginine 112 lie on the Periplasmic side of the membrane. A helical membrane pass occupies residues tryptophan 113 to isoleucine 133. Topologically, residues tyrosine 134 to glycine 148 are cytoplasmic. A helical transmembrane segment spans residues serine 149 to methionine 169. Topologically, residues glutamate 170 to aspartate 172 are periplasmic. The chain crosses the membrane as a helical span at residues phenylalanine 173–alanine 193. Residues leucine 194–arginine 196 lie on the Cytoplasmic side of the membrane. A helical membrane pass occupies residues phenylalanine 197–tyrosine 217. The Periplasmic portion of the chain corresponds to arginine 218–aspartate 272. A helical membrane pass occupies residues phenylalanine 273–leucine 293. The Cytoplasmic portion of the chain corresponds to phenylalanine 294–asparagine 316. Residues alanine 317–valine 337 form a helical membrane-spanning segment. Residues asparagine 338–threonine 348 are Periplasmic-facing. Residues leucine 349–leucine 369 traverse the membrane as a helical segment. The Cytoplasmic segment spans residues leucine 370–arginine 397.

This sequence belongs to the SEDS family. FtsW subfamily.

It localises to the cell inner membrane. The catalysed reaction is [GlcNAc-(1-&gt;4)-Mur2Ac(oyl-L-Ala-gamma-D-Glu-L-Lys-D-Ala-D-Ala)](n)-di-trans,octa-cis-undecaprenyl diphosphate + beta-D-GlcNAc-(1-&gt;4)-Mur2Ac(oyl-L-Ala-gamma-D-Glu-L-Lys-D-Ala-D-Ala)-di-trans,octa-cis-undecaprenyl diphosphate = [GlcNAc-(1-&gt;4)-Mur2Ac(oyl-L-Ala-gamma-D-Glu-L-Lys-D-Ala-D-Ala)](n+1)-di-trans,octa-cis-undecaprenyl diphosphate + di-trans,octa-cis-undecaprenyl diphosphate + H(+). It functions in the pathway cell wall biogenesis; peptidoglycan biosynthesis. Functionally, peptidoglycan polymerase that is essential for cell division. This is Probable peptidoglycan glycosyltransferase FtsW from Hahella chejuensis (strain KCTC 2396).